The chain runs to 31 residues: Putative translational regulatory protein ArgL (31 aa).

Its function is as follows. May serve a regulatory role in expression of downstream gene argF; in an argL-argF-lacZ fusion mutation of the start codon to a stop codon in argL increases expression of beta-galactosidase. This Escherichia coli (strain K12) protein is Putative translational regulatory protein ArgL.